The sequence spans 153 residues: Large ribosomal subunit protein uL15 (153 aa).

The interval 1-42 (MKLNTIKPGIGSAKPKRRVGRGIGSGLGKTCGRGHKGQKSRA) is disordered. Gly residues predominate over residues 21–31 (RGIGSGLGKTC).

This sequence belongs to the universal ribosomal protein uL15 family. As to quaternary structure, part of the 50S ribosomal subunit.

Binds to the 23S rRNA. This chain is Large ribosomal subunit protein uL15, found in Nitrosomonas europaea (strain ATCC 19718 / CIP 103999 / KCTC 2705 / NBRC 14298).